The chain runs to 1227 residues: MLNLLSISSSSRLRFLNKVSSLTYHYSFAFFSTSSPASSSSSSLGNDSAIPRNYESSSFNLLSRSKEKRDLTGSSLKDLLFDLSDVVPNITRRFRRFPGLKPEDVLELSLGFESELQRGGIGNIKVQALWEIFRWASVQYQGFKHLPQACEIMASMLIREGMVKEVELLLMEMERHGDTMVNEGIFCDLIGKYVDDFDSRKAVMLFDWMRRKGLVPLTSCYQILIDQLVRVHRTESAYRICLDWVETRAELNHMNIDSIGKVIELLCLDQKVQEARVLARKLVALGCILNSSIYSKITIGYNEKQDFEDLLSFIGEVKYEPDVFVGNRILHSLCRRFGSERAYVYMEELEHLGFKQDEVTFGILIGWCCYEGDIKRAVLYLSEIMSKGYKPDVYSYNAILSGLFRKGLWQHTHCILDEMKENGMMLSLSTFKIMVTGYCKARQFEEAKRIVNKMFGYGLIEASKVEDPLSEAFSLVGFDPLAVRLKRDNDSTFSKAEFFDDLGNGLYLHTDLDAYEQRVNMVLDRSVLPEFNSLIVRASEDGDLQTALRLLDEMARWGQKLSRRSFAVLMRSLCASRAHLRVSISLLEKWPKLAYQLDGETLNFLVQEYCKKGFSRHSKLIFHKMVQMHHPIDNVTYTSLIRCFCKKETLNDLLNVWGAAQNDNWLPDLNDCGDLWNCLVRKGLVEEVVQLFERVFISYPLSQSEACRIFVEKLTVLGFSCIAHSVVKRLEGEGCIVEQEVYNHLIKGLCTEKKDSAAFAILDEMLDKKHIPSLGSCLMLIPRLCRANKAGTAFNLAEQIDSSYVHYALIKGLSLAGKMLDAENQLRIMLSNGLSSYNKIYNVMFQGYCKGNNWMKVEEVLGLMVRKNIICSVKSYREYVRKMCLEPQSLSAISLKEFLLLGESNPGGVIIYNMLIFYMFRAKNHLEVNKVLLEMQGRGVLPDETTFNFLVHGYSSSADYSSSLRYLSAMISKGMKPNNRSLRAVTSSLCDNGDVKKALDLWQVMESKGWNLGSSVVQTKIVETLISKGEIPKAEDFLTRVTRNGMMAPNYDNIIKKLSDRGNLDIAVHLLNTMLKNQSIPGSSSYDSVINGLLRYNQLDKAMDFHTEMVELGLSPSISTWSGLVHKFCEACQVLESERLIKSMVGLGESPSQEMFKTVIDRFRVEKNTVKASEMMEMMQKCGYEVDFETHWSLISNMSSSKEKKTTTAGEGFLSRLLSGNGFTWKR.

A mitochondrion-targeting transit peptide spans 1–31 (MLNLLSISSSSRLRFLNKVSSLTYHYSFAFF). PPR repeat units follow at residues 146 to 180 (LPQA…GDTM), 182 to 216 (NEGI…GLVP), 217 to 251 (LTSC…RAEL), 255 to 289 (NIDS…GCIL), 290 to 320 (NSSI…VKYE), 322 to 356 (DVFV…GFKQ), 357 to 391 (DEVT…GYKP), 392 to 426 (DVYS…GMML), 427 to 461 (SLST…GLIE), 527 to 561 (VLPE…GQKL), 562 to 597 (SRRS…AYQL), 598 to 632 (DGET…HHPI), 633 to 667 (DNVT…NWLP), 668 to 698 (DLND…VFIS), 703 to 737 (QSEA…GCIV), 738 to 772 (EQEV…KHIP), 773 to 800 (SLGS…AEQI), 802 to 836 (SSYV…GLSS), 837 to 871 (YNKI…NIIC), 872 to 906 (SVKS…ESNP), 908 to 942 (GVII…GVLP), 943 to 977 (DETT…GMKP), 978 to 1012 (NNRS…GWNL), 1014 to 1044 (SSVV…VTRN), 1047 to 1081 (MAPN…QSIP), 1082 to 1116 (GSSS…GLSP), 1117 to 1151 (SIST…GESP), and 1152 to 1186 (SQEM…GYEV).

Belongs to the PPR family. P subfamily.

It localises to the mitochondrion. This Arabidopsis thaliana (Mouse-ear cress) protein is Pentatricopeptide repeat-containing protein At5g15280, mitochondrial.